Consider the following 241-residue polypeptide: 2-C-methyl-D-erythritol 4-phosphate cytidylyltransferase (241 aa).

Belongs to the IspD/TarI cytidylyltransferase family. IspD subfamily.

The enzyme catalyses 2-C-methyl-D-erythritol 4-phosphate + CTP + H(+) = 4-CDP-2-C-methyl-D-erythritol + diphosphate. It functions in the pathway isoprenoid biosynthesis; isopentenyl diphosphate biosynthesis via DXP pathway; isopentenyl diphosphate from 1-deoxy-D-xylulose 5-phosphate: step 2/6. Catalyzes the formation of 4-diphosphocytidyl-2-C-methyl-D-erythritol from CTP and 2-C-methyl-D-erythritol 4-phosphate (MEP). In Mycobacterium leprae (strain Br4923), this protein is 2-C-methyl-D-erythritol 4-phosphate cytidylyltransferase.